Reading from the N-terminus, the 293-residue chain is SAGA-associated factor 29 (293 aa).

Positions L3 to E86 form a coiled coil. The region spanning G152–K293 is the SGF29 C-terminal domain. Histone H3K4me3 N-terminus binding regions lie at residues D194–D196 and Q240–C243. The segment at F264–D266 is histone H3K4me3 binding. K288 bears the N6-acetyllysine mark.

Belongs to the SGF29 family. As to quaternary structure, interacts with dimethylated and trimethylated 'Lys-4' of histone H3 (H3K4me2 and H3K4me3), with a preference for the trimethylated form (H3K4me3). Component of some SAGA-type complexes. Component of the ADA2A-containing complex (ATAC), composed of KAT14, KAT2A, TADA2L, TADA3L, ZZ3, MBIP, WDR5, YEATS2, CCDC101 and DR1. Interacts with (methylated) CGAS. Interacts with TADA3L, GCN5L2, SUPT3H and MYC.

Its subcellular location is the nucleus. Chromatin reader component of some histone acetyltransferase (HAT) SAGA-type complexes like the TFTC-HAT, ATAC or STAGA complexes. SGF29 specifically recognizes and binds methylated 'Lys-4' of histone H3 (H3K4me), with a preference for trimethylated form (H3K4me3). In the SAGA-type complexes, SGF29 is required to recruit complexes to H3K4me. Involved in the response to endoplasmic reticulum (ER) stress by recruiting the SAGA complex to H3K4me, thereby promoting histone H3 acetylation and cell survival. Also binds non-histone proteins that are methylated on Lys residues: specifically recognizes and binds CGAS monomethylated on 'Lys-491'. The chain is SAGA-associated factor 29 from Mus musculus (Mouse).